The following is a 289-amino-acid chain: Ferri-bacillibactin esterase BesA (289 aa).

Catalysis depends on charge relay system residues serine 163, glutamate 225, and histidine 263.

This sequence belongs to the esterase D family.

Its subcellular location is the cytoplasm. Its function is as follows. Catalyzes the hydrolysis of the trilactone cycle of ferri-bacillibactin (ferri-BB) complex, leading to the formation of bacillibactin monomers and to cytosolic iron release, thus making iron available for metabolic use. Can also hydrolyze bacillibactin (BB), however the catalytic efficiency for ferri-BB hydrolysis is much higher than for BB. The chain is Ferri-bacillibactin esterase BesA (besA) from Bacillus subtilis (strain 168).